The following is a 436-amino-acid chain: Serine--tRNA ligase (436 aa).

A compositionally biased stretch (basic and acidic residues) spans 43–55; that stretch reads TKSEQLKQKRNEV. Positions 43–69 are disordered; it reads TKSEQLKQKRNEVSDQIAQAKRNKEDA. 237 to 239 provides a ligand contact to L-serine; that stretch reads TAE. Position 268–270 (268–270) interacts with ATP; it reads RSE. Glu291 provides a ligand contact to L-serine. Residue 355 to 358 participates in ATP binding; that stretch reads EISS. An L-serine-binding site is contributed by Ser390.

Belongs to the class-II aminoacyl-tRNA synthetase family. Type-1 seryl-tRNA synthetase subfamily. In terms of assembly, homodimer. The tRNA molecule binds across the dimer.

Its subcellular location is the cytoplasm. The catalysed reaction is tRNA(Ser) + L-serine + ATP = L-seryl-tRNA(Ser) + AMP + diphosphate + H(+). It catalyses the reaction tRNA(Sec) + L-serine + ATP = L-seryl-tRNA(Sec) + AMP + diphosphate + H(+). It functions in the pathway aminoacyl-tRNA biosynthesis; selenocysteinyl-tRNA(Sec) biosynthesis; L-seryl-tRNA(Sec) from L-serine and tRNA(Sec): step 1/1. Its function is as follows. Catalyzes the attachment of serine to tRNA(Ser). Is also able to aminoacylate tRNA(Sec) with serine, to form the misacylated tRNA L-seryl-tRNA(Sec), which will be further converted into selenocysteinyl-tRNA(Sec). The sequence is that of Serine--tRNA ligase from Lactobacillus gasseri (strain ATCC 33323 / DSM 20243 / BCRC 14619 / CIP 102991 / JCM 1131 / KCTC 3163 / NCIMB 11718 / NCTC 13722 / AM63).